The sequence spans 366 residues: uncharacterized protein (366 aa).

In terms of domain architecture, OBG-type G spans glycine 64–asparagine 289. GTP-binding positions include glycine 70–serine 77, aspartate 116–isoleucine 120, and asparagine 247–aspartate 250. The region spanning asparagine 289 to lysine 365 is the TGS domain.

The protein belongs to the TRAFAC class OBG-HflX-like GTPase superfamily. OBG GTPase family.

This is an uncharacterized protein from Schizosaccharomyces pombe (strain 972 / ATCC 24843) (Fission yeast).